The following is an 81-amino-acid chain: MSHTVKIYDTCIGCTQCVRACPTDVLEMVPWDGCKASQIASAPRTEDCVGCKRCESACPTDFLSVRVYLGSETTRSMGLAY.

4Fe-4S ferredoxin-type domains follow at residues Ser2 to Trp31 and Ile39 to Tyr68. Residues Cys11, Cys14, Cys17, Cys21, Cys48, Cys51, Cys54, and Cys58 each contribute to the [4Fe-4S] cluster site.

As to quaternary structure, the eukaryotic PSI reaction center is composed of at least 11 subunits. [4Fe-4S] cluster serves as cofactor.

The protein localises to the plastid. Its subcellular location is the chloroplast thylakoid membrane. It carries out the reaction reduced [plastocyanin] + hnu + oxidized [2Fe-2S]-[ferredoxin] = oxidized [plastocyanin] + reduced [2Fe-2S]-[ferredoxin]. Apoprotein for the two 4Fe-4S centers FA and FB of photosystem I (PSI); essential for photochemical activity. FB is the terminal electron acceptor of PSI, donating electrons to ferredoxin. The C-terminus interacts with PsaA/B/D and helps assemble the protein into the PSI complex. Required for binding of PsaD and PsaE to PSI. PSI is a plastocyanin/cytochrome c6-ferredoxin oxidoreductase, converting photonic excitation into a charge separation, which transfers an electron from the donor P700 chlorophyll pair to the spectroscopically characterized acceptors A0, A1, FX, FA and FB in turn. This chain is Photosystem I iron-sulfur center, found in Chlorella vulgaris (Green alga).